The chain runs to 602 residues: Sulfite reductase [NADPH] hemoprotein beta-component (602 aa).

Residues 1–15 (MDDHKTASPPRERSY) show a composition bias toward basic and acidic residues. Residues 1–24 (MDDHKTASPPRERSYETPPAERPI) form a disordered region. [4Fe-4S] cluster is bound by residues Cys-458, Cys-464, Cys-503, and Cys-507. Cys-507 contacts siroheme.

Belongs to the nitrite and sulfite reductase 4Fe-4S domain family. Alpha(8)-beta(8). The alpha component is a flavoprotein, the beta component is a hemoprotein. Siroheme is required as a cofactor. Requires [4Fe-4S] cluster as cofactor.

It carries out the reaction hydrogen sulfide + 3 NADP(+) + 3 H2O = sulfite + 3 NADPH + 4 H(+). It functions in the pathway sulfur metabolism; hydrogen sulfide biosynthesis; hydrogen sulfide from sulfite (NADPH route): step 1/1. Functionally, component of the sulfite reductase complex that catalyzes the 6-electron reduction of sulfite to sulfide. This is one of several activities required for the biosynthesis of L-cysteine from sulfate. In Methylobacterium nodulans (strain LMG 21967 / CNCM I-2342 / ORS 2060), this protein is Sulfite reductase [NADPH] hemoprotein beta-component.